The sequence spans 75 residues: UPF0352 protein YPTB1297 (75 aa).

This sequence belongs to the UPF0352 family.

The chain is UPF0352 protein YPTB1297 from Yersinia pseudotuberculosis serotype I (strain IP32953).